Consider the following 119-residue polypeptide: Large ribosomal subunit protein uL18 (119 aa).

Residues 1–20 (MSQIDKAARRQKIKARSRAT) form a disordered region. Residues 9–19 (RRQKIKARSRA) show a composition bias toward basic residues.

It belongs to the universal ribosomal protein uL18 family. In terms of assembly, part of the 50S ribosomal subunit; part of the 5S rRNA/L5/L18/L25 subcomplex. Contacts the 5S and 23S rRNAs.

Functionally, this is one of the proteins that bind and probably mediate the attachment of the 5S RNA into the large ribosomal subunit, where it forms part of the central protuberance. This Chlorobaculum parvum (strain DSM 263 / NCIMB 8327) (Chlorobium vibrioforme subsp. thiosulfatophilum) protein is Large ribosomal subunit protein uL18.